The chain runs to 177 residues: Preprotein translocase subunit SECE1 (177 aa).

A chloroplast-targeting transit peptide spans M1–R38. The disordered stretch occupies residues R60–V87. Residues G64 to S79 are compositionally biased toward low complexity. The chain crosses the membrane as a helical span at residues V140 to A160.

Belongs to the SecE/SEC61-gamma family. Part of the Sec protein translocation apparatus. Interacts with SCY1 and ALB3.

Its subcellular location is the plastid. The protein resides in the chloroplast thylakoid membrane. Involved in the import/insertion pathway in the thylakoids. The signal recognition particle is not involved in the insertion of SECE1 in the thylakoid membrane. The sequence is that of Preprotein translocase subunit SECE1 (SECE1) from Arabidopsis thaliana (Mouse-ear cress).